A 426-amino-acid chain; its full sequence is Glucose-6-phosphate isomerase (426 aa).

The active-site Proton donor is Glu-282. Catalysis depends on residues His-303 and Lys-419.

The protein belongs to the GPI family.

It localises to the cytoplasm. The catalysed reaction is alpha-D-glucose 6-phosphate = beta-D-fructose 6-phosphate. It functions in the pathway carbohydrate biosynthesis; gluconeogenesis. It participates in carbohydrate degradation; glycolysis; D-glyceraldehyde 3-phosphate and glycerone phosphate from D-glucose: step 2/4. Catalyzes the reversible isomerization of glucose-6-phosphate to fructose-6-phosphate. In Mycoplasmoides gallisepticum (strain R(low / passage 15 / clone 2)) (Mycoplasma gallisepticum), this protein is Glucose-6-phosphate isomerase.